The following is a 1849-amino-acid chain: NADH-ubiquinone oxidoreductase chain 5 (1849 aa).

A run of 41 helical transmembrane segments spans residues 76–93 (YLLL…TVCY), 98–120 (LILL…YLQY), 190–212 (YWLC…IIGW), 222–244 (LVPT…IYLY), 279–301 (HLLT…ILSS), 316–338 (LALQ…ILCY), 358–380 (LEII…ILSV), 390–412 (VIIL…TILI), 419–441 (IAVY…IWLL), 483–505 (LLDA…CLGV), 510–532 (LFIA…LQVV), 536–558 (ISYI…VYSI), 565–587 (LIMY…IHTI), 621–640 (IWLI…STLV), 683–705 (WVRF…YVQF), 718–740 (LTRI…QGIL), 745–767 (IISY…LTIL), 797–819 (PTWV…LVTV), 868–890 (ILLL…LLSL), 905–927 (LTVQ…YIVL), 966–988 (LYSY…SLLE), 1008–1030 (PDLL…ELLL), 1073–1095 (LTVV…QILF), 1105–1127 (LATI…LSYL), 1172–1194 (TYLL…IYII), 1219–1241 (VYFL…FFYH), 1248–1270 (GIFY…TLYY), 1296–1318 (IITF…AIIL), 1330–1352 (FAYN…IVSY), 1357–1379 (MIIF…YARI), 1418–1440 (LFAL…FDFT), 1444–1466 (VIVF…FVWL), 1478–1500 (ALIH…APIL), 1504–1526 (VYTL…ILAT), 1533–1555 (KAVA…FLAF), 1559–1581 (LIYL…YIVH), 1602–1624 (IAIY…GFFA), 1639–1661 (VATF…LYRI), 1719–1741 (LLHL…LVTG), 1773–1795 (VRNI…TAIN), and 1802–1824 (IIYL…HYFL).

Belongs to the complex I subunit 5 family.

Its subcellular location is the hydrogenosome membrane. It catalyses the reaction a ubiquinone + NADH + 5 H(+)(in) = a ubiquinol + NAD(+) + 4 H(+)(out). The protein is NADH-ubiquinone oxidoreductase chain 5 (nad5) of Nyctotherus ovalis.